Reading from the N-terminus, the 290-residue chain is ATP synthase gamma chain (290 aa).

This sequence belongs to the ATPase gamma chain family. F-type ATPases have 2 components, CF(1) - the catalytic core - and CF(0) - the membrane proton channel. CF(1) has five subunits: alpha(3), beta(3), gamma(1), delta(1), epsilon(1). CF(0) has three main subunits: a, b and c.

The protein resides in the cell membrane. Functionally, produces ATP from ADP in the presence of a proton gradient across the membrane. The gamma chain is believed to be important in regulating ATPase activity and the flow of protons through the CF(0) complex. In Listeria welshimeri serovar 6b (strain ATCC 35897 / DSM 20650 / CCUG 15529 / CIP 8149 / NCTC 11857 / SLCC 5334 / V8), this protein is ATP synthase gamma chain.